Reading from the N-terminus, the 113-residue chain is Putative glycerol transporter Lin0367 (113 aa).

Helical transmembrane passes span 3 to 23 (IGIA…IRMM), 30 to 50 (EWGA…VWTI), 63 to 83 (GTVW…ASLL), and 92 to 112 (VVNL…LSLF).

The protein resides in the membrane. In terms of biological role, could be involved in the glycerol uptake either via facilitated diffusion or active transport. The polypeptide is Putative glycerol transporter Lin0367 (Listeria innocua serovar 6a (strain ATCC BAA-680 / CLIP 11262)).